Here is a 264-residue protein sequence, read N- to C-terminus: Type III pantothenate kinase 2 (264 aa).

6–13 is an ATP binding site; that stretch reads DVGNTFTV. Substrate-binding positions include Tyr-100 and 107–110; that span reads GADR. Residue Asp-109 is the Proton acceptor of the active site. Asp-129 contacts K(+). ATP is bound at residue Thr-132. Thr-184 is a substrate binding site.

Belongs to the type III pantothenate kinase family. As to quaternary structure, homodimer. It depends on NH4(+) as a cofactor. K(+) serves as cofactor.

It is found in the cytoplasm. The enzyme catalyses (R)-pantothenate + ATP = (R)-4'-phosphopantothenate + ADP + H(+). Its pathway is cofactor biosynthesis; coenzyme A biosynthesis; CoA from (R)-pantothenate: step 1/5. Functionally, catalyzes the phosphorylation of pantothenate (Pan), the first step in CoA biosynthesis. The polypeptide is Type III pantothenate kinase 2 (Symbiobacterium thermophilum (strain DSM 24528 / JCM 14929 / IAM 14863 / T)).